A 122-amino-acid polypeptide reads, in one-letter code: Large ribosomal subunit protein bL12 (122 aa).

It belongs to the bacterial ribosomal protein bL12 family. As to quaternary structure, homodimer. Part of the ribosomal stalk of the 50S ribosomal subunit. Forms a multimeric L10(L12)X complex, where L10 forms an elongated spine to which 2 to 4 L12 dimers bind in a sequential fashion. Binds GTP-bound translation factors.

Functionally, forms part of the ribosomal stalk which helps the ribosome interact with GTP-bound translation factors. Is thus essential for accurate translation. In Fusobacterium nucleatum subsp. nucleatum (strain ATCC 25586 / DSM 15643 / BCRC 10681 / CIP 101130 / JCM 8532 / KCTC 2640 / LMG 13131 / VPI 4355), this protein is Large ribosomal subunit protein bL12.